The sequence spans 344 residues: NADH-ubiquinone oxidoreductase chain 2 (344 aa).

Helical transmembrane passes span 1–21 (MNPL…TITL), 24–44 (FHWL…IPLM), 59–79 (YFLT…ISAW), 94–114 (MNIL…HFWI), 121–141 (ISLP…MALL), 150–170 (LNLT…GGIG), 177–197 (IMAF…KFDP), 201–221 (LLNF…LTTI), 245–265 (LILL…KLLI), 273–293 (NATL…FFYI), and 324–344 (TAIM…LLLL).

The protein belongs to the complex I subunit 2 family.

The protein resides in the mitochondrion inner membrane. The catalysed reaction is a ubiquinone + NADH + 5 H(+)(in) = a ubiquinol + NAD(+) + 4 H(+)(out). Functionally, core subunit of the mitochondrial membrane respiratory chain NADH dehydrogenase (Complex I) that is believed to belong to the minimal assembly required for catalysis. Complex I functions in the transfer of electrons from NADH to the respiratory chain. The immediate electron acceptor for the enzyme is believed to be ubiquinone. The sequence is that of NADH-ubiquinone oxidoreductase chain 2 (MT-ND2) from Aquarana catesbeiana (American bullfrog).